We begin with the raw amino-acid sequence, 288 residues long: Polyamine aminopropyltransferase (288 aa).

The PABS domain occupies 9–238 (ETLHDQFGQY…GIMTFAWATD (230 aa)). Gln33 contacts S-methyl-5'-thioadenosine. Spermidine is bound by residues His64 and Asp88. S-methyl-5'-thioadenosine contacts are provided by residues Glu108 and 140–141 (DG). The active-site Proton acceptor is Asp158. 158-161 (DCTD) is a binding site for spermidine. An S-methyl-5'-thioadenosine-binding site is contributed by Pro165.

The protein belongs to the spermidine/spermine synthase family. In terms of assembly, homodimer or homotetramer.

The protein localises to the cytoplasm. It catalyses the reaction S-adenosyl 3-(methylsulfanyl)propylamine + putrescine = S-methyl-5'-thioadenosine + spermidine + H(+). It functions in the pathway amine and polyamine biosynthesis; spermidine biosynthesis; spermidine from putrescine: step 1/1. In terms of biological role, catalyzes the irreversible transfer of a propylamine group from the amino donor S-adenosylmethioninamine (decarboxy-AdoMet) to putrescine (1,4-diaminobutane) to yield spermidine. The chain is Polyamine aminopropyltransferase from Shigella flexneri serotype 5b (strain 8401).